The sequence spans 432 residues: Pachytene checkpoint protein 2 homolog (432 aa).

Position 179–186 (Gly179–Thr186) interacts with ATP.

The protein belongs to the AAA ATPase family. PCH2 subfamily.

Plays a key role in chromosome recombination and chromosome structure development during meiosis. Required at early steps in meiotic recombination that leads to non-crossovers pathways. Also needed for efficient completion of homologous synapsis by influencing crossover distribution along the chromosomes affecting both crossovers and non-crossovers pathways. The protein is Pachytene checkpoint protein 2 homolog (trip13) of Xenopus tropicalis (Western clawed frog).